Reading from the N-terminus, the 285-residue chain is Bifunctional protein FolD (285 aa).

NADP(+) contacts are provided by residues 165-167 (GRG), threonine 192, and valine 233.

Belongs to the tetrahydrofolate dehydrogenase/cyclohydrolase family. As to quaternary structure, homodimer.

The catalysed reaction is (6R)-5,10-methylene-5,6,7,8-tetrahydrofolate + NADP(+) = (6R)-5,10-methenyltetrahydrofolate + NADPH. It carries out the reaction (6R)-5,10-methenyltetrahydrofolate + H2O = (6R)-10-formyltetrahydrofolate + H(+). The protein operates within one-carbon metabolism; tetrahydrofolate interconversion. In terms of biological role, catalyzes the oxidation of 5,10-methylenetetrahydrofolate to 5,10-methenyltetrahydrofolate and then the hydrolysis of 5,10-methenyltetrahydrofolate to 10-formyltetrahydrofolate. The chain is Bifunctional protein FolD from Mycobacterium sp. (strain MCS).